The primary structure comprises 85 residues: ATP synthase subunit c (85 aa).

Transmembrane regions (helical) follow at residues 10–30 (IAVALLIGLGALGTAIGFGLL) and 53–73 (FIVAGLLDAVTMIGVGIALFF).

Belongs to the ATPase C chain family. F-type ATPases have 2 components, F(1) - the catalytic core - and F(0) - the membrane proton channel. F(1) has five subunits: alpha(3), beta(3), gamma(1), delta(1), epsilon(1). F(0) has three main subunits: a(1), b(2) and c(10-14). The alpha and beta chains form an alternating ring which encloses part of the gamma chain. F(1) is attached to F(0) by a central stalk formed by the gamma and epsilon chains, while a peripheral stalk is formed by the delta and b chains.

It localises to the cell inner membrane. Functionally, f(1)F(0) ATP synthase produces ATP from ADP in the presence of a proton or sodium gradient. F-type ATPases consist of two structural domains, F(1) containing the extramembraneous catalytic core and F(0) containing the membrane proton channel, linked together by a central stalk and a peripheral stalk. During catalysis, ATP synthesis in the catalytic domain of F(1) is coupled via a rotary mechanism of the central stalk subunits to proton translocation. Key component of the F(0) channel; it plays a direct role in translocation across the membrane. A homomeric c-ring of between 10-14 subunits forms the central stalk rotor element with the F(1) delta and epsilon subunits. The sequence is that of ATP synthase subunit c from Pseudomonas aeruginosa (strain LESB58).